The chain runs to 141 residues: MLMPKRTKFRKQMKGRNRGYATRGASLATGEFALKAVEAGRVNSRQIEAARQALTRHVKRQAKIWIRVFPDKPLTKKPLQTRMGKGKAGVEEWVMNIKPGRIIFEMAGVDEELAREALTLALHKLPFKSKFVTRESENEIY.

The protein belongs to the universal ribosomal protein uL16 family. Part of the 50S ribosomal subunit.

Functionally, binds 23S rRNA and is also seen to make contacts with the A and possibly P site tRNAs. The sequence is that of Large ribosomal subunit protein uL16 from Campylobacter concisus (strain 13826).